A 77-amino-acid polypeptide reads, in one-letter code: Conotoxin Vc6b (77 aa).

Residues 1–22 (MKLTCMMIVAVLFLTANTFVTA) form the signal peptide. Positions 23-47 (DDSGNGMENLFPKAGHEMENLEASN) are excised as a propeptide. 3 disulfide bridges follow: Cys52–Cys66, Cys59–Cys72, and Cys67–Cys76.

Expressed by the venom duct.

The protein localises to the secreted. The chain is Conotoxin Vc6b from Conus victoriae (Queen Victoria cone).